The sequence spans 207 residues: Large ribosomal subunit protein uL4 (207 aa).

The segment at 47 to 78 (GTAKTKTRAEVRGGGKKPWRQKGTGRARQGSI) is disordered. The segment covering 60-71 (GGKKPWRQKGTG) has biased composition (basic residues).

This sequence belongs to the universal ribosomal protein uL4 family. In terms of assembly, part of the 50S ribosomal subunit.

Its function is as follows. One of the primary rRNA binding proteins, this protein initially binds near the 5'-end of the 23S rRNA. It is important during the early stages of 50S assembly. It makes multiple contacts with different domains of the 23S rRNA in the assembled 50S subunit and ribosome. In terms of biological role, forms part of the polypeptide exit tunnel. This Acholeplasma laidlawii (strain PG-8A) protein is Large ribosomal subunit protein uL4.